Here is a 781-residue protein sequence, read N- to C-terminus: Mitochondrial inner membrane m-AAA protease component paraplegin (781 aa).

The N-terminal 43 residues, 1–43 (MAAALLLLRGLRPGPEPRPRRLWGLLSGRGPGLSSGAGARRPY), are a transit peptide targeting the mitochondrion. Disordered stretches follow at residues 22 to 56 (LWGL…AAAG) and 103 to 135 (TSRM…ERED). The span at 36-56 (GAGARRPYAARGTPVGPAAAG) shows a compositional bias: low complexity. Residues 44–105 (AARGTPVGPA…GSTLYFNTSR (62 aa)) constitute a propeptide, removed in mature form. The Mitochondrial matrix segment spans residues 106–144 (MKQKNKDNDKPKGKTPEDDEEEKRRKEREDQMYRERLRT). Over residues 109 to 135 (KNKDNDKPKGKTPEDDEEEKRRKERED) the composition is skewed to basic and acidic residues. Residues 145–165 (LFIIALVMSLLNSLSTSGGSI) form a helical membrane-spanning segment. Topologically, residues 166–248 (SWADFVNEML…DRIPVSYKRT (83 aa)) are mitochondrial intermembrane. A helical transmembrane segment spans residues 249–269 (GFFGNALYALGMTAVGLAILW). The Mitochondrial matrix segment spans residues 270–781 (YVFRLAGMTG…ASGEEEAPAP (512 aa)). ATP is bound by residues Ala312, Gly352, Cys353, Gly354, Lys355, Thr356, and Leu357. At Tyr505 the chain carries 3'-nitrotyrosine. Position 574 (His574) interacts with Zn(2+). Residue Glu575 is part of the active site. Zn(2+) is bound by residues His578 and Asp650. Positions 701–781 (HEAKLLVAKA…ASGEEEAPAP (81 aa)) are interaction with PPIF.

In the N-terminal section; belongs to the AAA ATPase family. It in the C-terminal section; belongs to the peptidase M41 family. Forms heterohexamers with SPG7 and AFG3L1. The m-AAA protease is either composed of homohexamers of AFG3L2 or heterohexamers of AFG3L1, AFG3L2 and/or SPG7. Component of the mitochondrial permeability transition pore complex (mPTPC), at least composed of SPG7, VDAC1 and PPIF. Interacts with MAIP1. The cofactor is Zn(2+). Upon import into the mitochondrion, the N-terminal transit peptide is cleaved by the mitochondrial-processing peptidase (MPP) to generate an intermediate form which undergoes a second proteolytic cleavage mediated by proteases AFG3L1 and/or AFG3L2 removing an additional N-terminal fragment to generate the proteolytically active mature form. In terms of tissue distribution, expressed in the brain and retina (at protein level).

It localises to the mitochondrion inner membrane. The catalysed reaction is ATP + H2O = ADP + phosphate + H(+). Its function is as follows. Catalytic component of the m-AAA protease, a protease that plays a key role in proteostasis of inner mitochondrial membrane proteins, and which is essential for axonal and neuron development. SPG7 possesses both ATPase and protease activities: the ATPase activity is required to unfold substrates, threading them into the internal proteolytic cavity for hydrolysis into small peptide fragments. The m-AAA protease exerts a dual role in the mitochondrial inner membrane: it mediates the processing of specific regulatory proteins and ensures protein quality control by degrading misfolded polypeptides. Mediates protein maturation of the mitochondrial ribosomal subunit MRPL32/bL32m by catalyzing the cleavage of the presequence of MRPL32/bL32m prior to assembly into the mitochondrial ribosome. Acts as a regulator of calcium in neurons by mediating degradation of SMDT1/EMRE before its assembly with the uniporter complex, limiting the availability of SMDT1/EMRE for MCU assembly and promoting efficient assembly of gatekeeper subunits with MCU. Also regulates mitochondrial calcium by catalyzing degradation of MCU. Plays a role in the formation and regulation of the mitochondrial permeability transition pore (mPTP) and its proteolytic activity is dispensable for this function. This is Mitochondrial inner membrane m-AAA protease component paraplegin from Mus musculus (Mouse).